A 282-amino-acid chain; its full sequence is ATP phosphoribosyltransferase (282 aa).

Belongs to the ATP phosphoribosyltransferase family. Long subfamily. Requires Mg(2+) as cofactor.

The protein resides in the cytoplasm. It carries out the reaction 1-(5-phospho-beta-D-ribosyl)-ATP + diphosphate = 5-phospho-alpha-D-ribose 1-diphosphate + ATP. It functions in the pathway amino-acid biosynthesis; L-histidine biosynthesis; L-histidine from 5-phospho-alpha-D-ribose 1-diphosphate: step 1/9. Its activity is regulated as follows. Feedback inhibited by histidine. Catalyzes the condensation of ATP and 5-phosphoribose 1-diphosphate to form N'-(5'-phosphoribosyl)-ATP (PR-ATP). Has a crucial role in the pathway because the rate of histidine biosynthesis seems to be controlled primarily by regulation of HisG enzymatic activity. The chain is ATP phosphoribosyltransferase from Saccharopolyspora erythraea (strain ATCC 11635 / DSM 40517 / JCM 4748 / NBRC 13426 / NCIMB 8594 / NRRL 2338).